Here is a 106-residue protein sequence, read N- to C-terminus: Nucleoid-associated protein PD_1058 (106 aa).

The protein belongs to the YbaB/EbfC family. Homodimer.

Its subcellular location is the cytoplasm. The protein resides in the nucleoid. Its function is as follows. Binds to DNA and alters its conformation. May be involved in regulation of gene expression, nucleoid organization and DNA protection. This Xylella fastidiosa (strain Temecula1 / ATCC 700964) protein is Nucleoid-associated protein PD_1058.